The sequence spans 213 residues: Adenylate kinase (213 aa).

Residue 10-15 participates in ATP binding; sequence GSGKGT. An NMP region spans residues 30-59; it reads SVGDLLRNIISSSSELGKKIKGTVESGNLI. AMP is bound by residues Arg36, 57–59, 83–86, and Gln90; these read NLI and GFPR. The interval 125 to 160 is LID; it reads NRLACLDCKSIYSVSSFKSTTCAKCKSTRLEKRIDD. Position 126 (Arg126) interacts with ATP. Residues Cys129 and Cys132 each contribute to the Zn(2+) site. 135 to 136 serves as a coordination point for ATP; it reads IY. Cys146 and Cys149 together coordinate Zn(2+). Residues Arg157 and Arg169 each contribute to the AMP site. Leu195 serves as a coordination point for ATP.

The protein belongs to the adenylate kinase family. Monomer.

The protein localises to the cytoplasm. It carries out the reaction AMP + ATP = 2 ADP. Its pathway is purine metabolism; AMP biosynthesis via salvage pathway; AMP from ADP: step 1/1. Functionally, catalyzes the reversible transfer of the terminal phosphate group between ATP and AMP. Plays an important role in cellular energy homeostasis and in adenine nucleotide metabolism. In Wolbachia sp. subsp. Drosophila simulans (strain wRi), this protein is Adenylate kinase.